The following is a 436-amino-acid chain: UPF0597 protein YhaM (436 aa).

It belongs to the UPF0597 family.

The chain is UPF0597 protein YhaM from Salmonella paratyphi C (strain RKS4594).